A 353-amino-acid chain; its full sequence is Protein RecA (353 aa).

67–74 is an ATP binding site; sequence GPESSGKT.

Belongs to the RecA family.

It is found in the cytoplasm. Can catalyze the hydrolysis of ATP in the presence of single-stranded DNA, the ATP-dependent uptake of single-stranded DNA by duplex DNA, and the ATP-dependent hybridization of homologous single-stranded DNAs. It interacts with LexA causing its activation and leading to its autocatalytic cleavage. In Salmonella agona (strain SL483), this protein is Protein RecA.